The following is a 510-amino-acid chain: Glycosyl hydrolase YngK (510 aa).

Residues 1-30 form the signal peptide; the sequence is MKVCQKSIVRFLVSLIIGTFVISVPFMANA.

The protein belongs to the glycosyl hydrolase-like 10 (GHL10) family.

In Bacillus subtilis (strain 168), this protein is Glycosyl hydrolase YngK (yngK).